The primary structure comprises 248 residues: 2,3-bisphosphoglycerate-dependent phosphoglycerate mutase (248 aa).

Substrate is bound by residues 8–15 (RHGESEWN), 21–22 (TG), R60, 87–90 (ERHY), K98, 114–115 (RR), and 183–184 (GN). H9 (tele-phosphohistidine intermediate) is an active-site residue. The Proton donor/acceptor role is filled by E87.

It belongs to the phosphoglycerate mutase family. BPG-dependent PGAM subfamily.

The enzyme catalyses (2R)-2-phosphoglycerate = (2R)-3-phosphoglycerate. It functions in the pathway carbohydrate degradation; glycolysis; pyruvate from D-glyceraldehyde 3-phosphate: step 3/5. Catalyzes the interconversion of 2-phosphoglycerate and 3-phosphoglycerate. In Borrelia turicatae (strain 91E135), this protein is 2,3-bisphosphoglycerate-dependent phosphoglycerate mutase.